A 202-amino-acid polypeptide reads, in one-letter code: MPPMTRNTRNNPNGRFPGAFAPEDEDDLPKSKSQRKRDMTALQDIGAELESLPKDRLARVPMPEALADAIHAARKITSHEGKRRQMQFVGKVMRGLDDDEIATIRAALEGFKGTSKAETARMHLIERWRELLLADDDALTKFLGEHPSVDVQSVRNIIRNARKEKELAKPPKYFRELFQAIKTALEAKDADAAPDNAPEPEA.

Positions 1–13 (MPPMTRNTRNNPN) are enriched in low complexity. The tract at residues 1-39 (MPPMTRNTRNNPNGRFPGAFAPEDEDDLPKSKSQRKRDM) is disordered.

The protein belongs to the DarP family.

The protein resides in the cytoplasm. Member of a network of 50S ribosomal subunit biogenesis factors which assembles along the 30S-50S interface, preventing incorrect 23S rRNA structures from forming. Promotes peptidyl transferase center (PTC) maturation. The polypeptide is Dual-action ribosomal maturation protein DarP (Cupriavidus metallidurans (strain ATCC 43123 / DSM 2839 / NBRC 102507 / CH34) (Ralstonia metallidurans)).